A 615-amino-acid chain; its full sequence is ABC transporter G family member 22 (615 aa).

One can recognise an ABC transporter domain in the interval 31 to 279 (ITFKDLAYSV…EIGFPFPDQT (249 aa)). 67–74 (GPSGSGKT) is a binding site for ATP. Residues 364–610 (SNCLVRFAVA…TMVFLCLHYF (247 aa)) enclose the ABC transmembrane type-2 domain. The next 6 helical transmembrane spans lie at 370-390 (FAVAVFVGLLFGACFSGLGMD), 400-420 (VLFYLVINMILQPFASISLFI), 442-462 (LALMFFEILACIGTAFILGTI), 477-497 (FFAMAILTLAHLAGDFFMLII), 508-528 (FAVGAGVATIYQLFAGFFVPI), and 587-607 (INLIIVSSFAFAFFTMVFLCL).

It belongs to the ABC transporter superfamily. ABCG family. Eye pigment precursor importer (TC 3.A.1.204) subfamily.

Its subcellular location is the membrane. In terms of biological role, may be involved in cell migration. The sequence is that of ABC transporter G family member 22 (abcG22) from Dictyostelium discoideum (Social amoeba).